The sequence spans 99 residues: uncharacterized protein (99 aa).

This is an uncharacterized protein from Borreliella burgdorferi (strain ATCC 35210 / DSM 4680 / CIP 102532 / B31) (Borrelia burgdorferi).